The chain runs to 166 residues: Large ribosomal subunit protein uL10 (166 aa).

It belongs to the universal ribosomal protein uL10 family. In terms of assembly, part of the ribosomal stalk of the 50S ribosomal subunit. The N-terminus interacts with L11 and the large rRNA to form the base of the stalk. The C-terminus forms an elongated spine to which L12 dimers bind in a sequential fashion forming a multimeric L10(L12)X complex.

In terms of biological role, forms part of the ribosomal stalk, playing a central role in the interaction of the ribosome with GTP-bound translation factors. The chain is Large ribosomal subunit protein uL10 from Geobacillus sp. (strain WCH70).